A 165-amino-acid polypeptide reads, in one-letter code: MRIGIGFDVHPLKKGETLILGGVHIQGEYGLAGHSDADVLTHALMDAILGAMGEADIGYHFPDTDPSYRGISSLKLLKKVYNMMKPRGFSIGNIDLIIMAQSPKLSPYYNKIKENYTRILQLDSSRINIKATTTENLGFVGREEGIAAQAAVLLIDTKEGDINAG.

Residues D8 and H10 each contribute to the a divalent metal cation site. Residues 8-10 (DVH) and 34-35 (HS) contribute to the 4-CDP-2-C-methyl-D-erythritol 2-phosphate site. H42 is an a divalent metal cation binding site. Residues 56 to 58 (DIG), 61 to 65 (FPDTD), 132 to 135 (TTTE), F139, and R142 each bind 4-CDP-2-C-methyl-D-erythritol 2-phosphate.

It belongs to the IspF family. Homotrimer. Requires a divalent metal cation as cofactor.

The enzyme catalyses 4-CDP-2-C-methyl-D-erythritol 2-phosphate = 2-C-methyl-D-erythritol 2,4-cyclic diphosphate + CMP. Its pathway is isoprenoid biosynthesis; isopentenyl diphosphate biosynthesis via DXP pathway; isopentenyl diphosphate from 1-deoxy-D-xylulose 5-phosphate: step 4/6. Functionally, involved in the biosynthesis of isopentenyl diphosphate (IPP) and dimethylallyl diphosphate (DMAPP), two major building blocks of isoprenoid compounds. Catalyzes the conversion of 4-diphosphocytidyl-2-C-methyl-D-erythritol 2-phosphate (CDP-ME2P) to 2-C-methyl-D-erythritol 2,4-cyclodiphosphate (ME-CPP) with a corresponding release of cytidine 5-monophosphate (CMP). This is 2-C-methyl-D-erythritol 2,4-cyclodiphosphate synthase from Halothermothrix orenii (strain H 168 / OCM 544 / DSM 9562).